Consider the following 213-residue polypeptide: Uridine kinase (213 aa).

15–22 lines the ATP pocket; sequence GASASGKS.

Belongs to the uridine kinase family.

The protein localises to the cytoplasm. The catalysed reaction is uridine + ATP = UMP + ADP + H(+). The enzyme catalyses cytidine + ATP = CMP + ADP + H(+). Its pathway is pyrimidine metabolism; CTP biosynthesis via salvage pathway; CTP from cytidine: step 1/3. It functions in the pathway pyrimidine metabolism; UMP biosynthesis via salvage pathway; UMP from uridine: step 1/1. The protein is Uridine kinase of Serratia proteamaculans (strain 568).